Here is a 755-residue protein sequence, read N- to C-terminus: Cartilage oligomeric matrix protein (755 aa).

Residues 1 to 19 (MGPTACVLVLALAILRATG) form the signal peptide. The segment at 21–84 (GQIPLGGDLA…PARTPGLSVR (64 aa)) is COMP N-terminal. The EGF-like 1 domain occupies 85-124 (PVPLCAPGSCFPGVVCSETATGARCGPCPPGYTGNGSHCT). 21 cysteine pairs are disulfide-bonded: C89–C100, C94–C109, C112–C123, C129–C140, C134–C149, C152–C176, C182–C195, C189–C204, C207–C219, C227–C241, C235–C251, C253–C264, C280–C285, C290–C310, C326–C346, C349–C369, C385–C405, C408–C428, C446–C466, C482–C502, and C518–C739. N119 carries an N-linked (GlcNAc...) asparagine glycan. The EGF-like 2; calcium-binding domain occupies 125–177 (DVNECNAHPCFPRVRCINTSPGFHCEACPPGFSGPTHEGVGLTFAKSNKQVCT). The 43-residue stretch at 178-220 (DINECETGQHNCVPNSVCVNTRGSFQCGPCQPGFVGDQTSGCQ) folds into the EGF-like 3; calcium-binding domain. Residues 223 to 265 (GQHFCPDGSPSPCHEKANCVLERDGSRSCVCAVGWAGNGLLCG) form the EGF-like 4 domain. 8 TSP type-3 repeats span residues 266–298 (RDTD…NSGQ), 299–334 (EDVD…NPDQ), 335–357 (RNSD…NDDQ), 358–393 (KDTD…NFDQ), 394–416 (SDSD…NPDQ), 417–454 (RDVD…NSAQ), 455–490 (QDSD…NPGQ), and 491–526 (EDND…EVTL). Disordered stretches follow at residues 296–341 (SGQE…DSDK) and 353–501 (KNDD…VGDA). Basic and acidic residues-rich tracts occupy residues 332-341 (PDQRNSDSDK) and 353-368 (KNDD…RGDA). A Phosphoserine modification is found at S394. 2 stretches are compositionally biased toward basic and acidic residues: residues 412–424 (DNPD…HDFV) and 456–465 (DSDHDGKGDA). The mediates cell survival and induction of the IAP family of survival proteins stretch occupies residues 525-755 (TLTDFRAFQT…DYESHRLQRV (231 aa)). The 215-residue stretch at 530-744 (RAFQTVVLDP…LRYRCNDTIP (215 aa)) folds into the TSP C-terminal domain. Residue N740 is glycosylated (N-linked (GlcNAc...) asparagine).

The protein belongs to the thrombospondin family. In terms of assembly, pentamer; disulfide-linked. Exists in a more compact conformation in the presence of calcium and shows a more extended conformation in the absence of calcium. Interacts with ITGB3, ITGA5 and FN1. Binding to FN1 requires the presence of divalent cations (Ca(2+), Mg(2+) or Mn(2+)). The greatest amount of binding is seen in the presence of Mn(2+). Interacts with MATN1, MATN3, MATN4 and ACAN. Binds heparin, heparan sulfate and chondroitin sulfate. EDTA dimishes significantly its binding to ACAN and abolishes its binding to MATN3, MATN4 and chondroitin sulfate. Interacts with collagen I, II and IX, and interaction with these collagens is dependent on the presence of zinc ions. Interacts with ADAMTS12. Interacts with ITGA7. Requires Ca(2+) as cofactor. Proteolytically cleaved by metalloproteases ADAMTS4 and ADAMTS1 with ADAMTS4 showing more potent activity. Expressed in cartilage, including nasal, knee epiphyseal and rib tissues. Abundantly expressed in chondrocyte and tendon extracellular matrix (at protein level).

The protein resides in the secreted. Its subcellular location is the extracellular space. It localises to the extracellular matrix. Its function is as follows. Plays a role in the structural integrity of cartilage via its interaction with other extracellular matrix proteins such as the collagens and fibronectin. Can mediate the interaction of chondrocytes with the cartilage extracellular matrix through interaction with cell surface integrin receptors. Could play a role in the pathogenesis of osteoarthritis. Potent suppressor of apoptosis in both primary chondrocytes and transformed cells. Suppresses apoptosis by blocking the activation of caspase-3 and by inducing the IAP family of survival proteins (BIRC3, BIRC2, BIRC5 and XIAP). Essential for maintaining a vascular smooth muscle cells (VSMCs) contractile/differentiated phenotype under physiological and pathological stimuli. Maintains this phenotype of VSMCs by interacting with ITGA7. This chain is Cartilage oligomeric matrix protein, found in Mus musculus (Mouse).